The following is a 482-amino-acid chain: Bifunctional protein GlmU (482 aa).

The pyrophosphorylase stretch occupies residues 1–238 (MSATSPAAVV…HREILGINNR (238 aa)). UDP-N-acetyl-alpha-D-glucosamine is bound by residues 12–15 (LAAG), Lys-26, Gln-79, and 84–85 (GT). A Mg(2+)-binding site is contributed by Asp-110. 4 residues coordinate UDP-N-acetyl-alpha-D-glucosamine: Gly-147, Glu-163, Asn-178, and Asn-236. Asn-236 serves as a coordination point for Mg(2+). The linker stretch occupies residues 239-259 (LQLAEARRLLNERLLERAMLA). The tract at residues 260-482 (GVTVVDPAST…ASSQETDGQS (223 aa)) is N-acetyltransferase. Residues Arg-341 and Lys-359 each contribute to the UDP-N-acetyl-alpha-D-glucosamine site. His-371 serves as the catalytic Proton acceptor. UDP-N-acetyl-alpha-D-glucosamine contacts are provided by Tyr-374 and Asn-385. Residues Ala-388, 394-395 (NY), Ser-413, Ala-431, and Arg-448 each bind acetyl-CoA. The tract at residues 458-482 (VARKRPGSAAAQAAQASSQETDGQS) is disordered. Positions 465-476 (SAAAQAAQASSQ) are enriched in low complexity.

It in the N-terminal section; belongs to the N-acetylglucosamine-1-phosphate uridyltransferase family. The protein in the C-terminal section; belongs to the transferase hexapeptide repeat family. In terms of assembly, homotrimer. It depends on Mg(2+) as a cofactor.

It localises to the cytoplasm. The catalysed reaction is alpha-D-glucosamine 1-phosphate + acetyl-CoA = N-acetyl-alpha-D-glucosamine 1-phosphate + CoA + H(+). It carries out the reaction N-acetyl-alpha-D-glucosamine 1-phosphate + UTP + H(+) = UDP-N-acetyl-alpha-D-glucosamine + diphosphate. It functions in the pathway nucleotide-sugar biosynthesis; UDP-N-acetyl-alpha-D-glucosamine biosynthesis; N-acetyl-alpha-D-glucosamine 1-phosphate from alpha-D-glucosamine 6-phosphate (route II): step 2/2. It participates in nucleotide-sugar biosynthesis; UDP-N-acetyl-alpha-D-glucosamine biosynthesis; UDP-N-acetyl-alpha-D-glucosamine from N-acetyl-alpha-D-glucosamine 1-phosphate: step 1/1. Its pathway is bacterial outer membrane biogenesis; LPS lipid A biosynthesis. In terms of biological role, catalyzes the last two sequential reactions in the de novo biosynthetic pathway for UDP-N-acetylglucosamine (UDP-GlcNAc). The C-terminal domain catalyzes the transfer of acetyl group from acetyl coenzyme A to glucosamine-1-phosphate (GlcN-1-P) to produce N-acetylglucosamine-1-phosphate (GlcNAc-1-P), which is converted into UDP-GlcNAc by the transfer of uridine 5-monophosphate (from uridine 5-triphosphate), a reaction catalyzed by the N-terminal domain. The chain is Bifunctional protein GlmU from Streptomyces griseus subsp. griseus (strain JCM 4626 / CBS 651.72 / NBRC 13350 / KCC S-0626 / ISP 5235).